A 1450-amino-acid polypeptide reads, in one-letter code: Protein TIC 214 (1450 aa).

The next 6 helical transmembrane spans lie at 29-49, 61-81, 86-106, 132-152, 166-186, and 213-233; these read FGLY…IVVI, VMAF…IYYT, LFIK…FYWQ, FFDS…PIFF, LNFF…FFNA, and IIPI…HIPF.

This sequence belongs to the TIC214 family. As to quaternary structure, part of the Tic complex.

It is found in the plastid. Its subcellular location is the chloroplast inner membrane. Involved in protein precursor import into chloroplasts. May be part of an intermediate translocation complex acting as a protein-conducting channel at the inner envelope. The protein is Protein TIC 214 of Chaetosphaeridium globosum (Charophycean green alga).